The primary structure comprises 120 residues: Hydrogenase maturation factor HypA (120 aa).

Residue H2 participates in Ni(2+) binding. Residues C73, H76, C89, and C92 each coordinate Zn(2+).

Belongs to the HypA/HybF family.

Functionally, involved in the maturation of [NiFe] hydrogenases. Required for nickel insertion into the metal center of the hydrogenase. In Deinococcus radiodurans (strain ATCC 13939 / DSM 20539 / JCM 16871 / CCUG 27074 / LMG 4051 / NBRC 15346 / NCIMB 9279 / VKM B-1422 / R1), this protein is Hydrogenase maturation factor HypA.